The chain runs to 256 residues: Nuclear shuttle protein (256 aa).

Residues 18-50 (VSRNQSSKRGTFVRRTDGKRRKGPSSKAHDEPK) form a disordered region. The Bipartite nuclear localization signal signature appears at 21-42 (NQSSKRGTFVRRTDGKRRKGPS). The Nuclear localization signal signature appears at 81–96 (VLGKIEPNRSRSYIKL). The tract at residues 150–187 (EIFGARIHSHGNLAITPGLKDRYYVLHVLKRVLSVEKD) is interaction with Arabidopsis thaliana NSI protein.

This sequence belongs to the begomovirus nuclear shuttle protein family. Binds to single-stranded and double-stranded viral DNA. Interacts with the host nuclear shuttle interacting (NSI) protein. This interaction may allow NSP to recruit NSI monomers to the viral genome and thus regulate nuclear export of viral genome by NSP.

It localises to the host nucleus. The protein resides in the host cytoplasm. The protein localises to the host cell membrane. Functionally, binds to the genomic viral ssDNA, shuttles it into and out of the cell nucleus. Begomoviruses use 2 proteins to transport their DNA from cell to cell. The nuclear shuttle protein (NSP) shuttles it between nucleus and cytoplasm and the movement protein (MP) probably transports the DNA-NSP complex to the cell periphery and facilitates movement across the cell wall. The sequence is that of Nuclear shuttle protein from Brassica oleracea (Wild cabbage).